The chain runs to 671 residues: DNA ligase (671 aa).

Residues 31 to 35, 80 to 81, and E110 contribute to the NAD(+) site; these read DAEYD and SL. K112 serves as the catalytic N6-AMP-lysine intermediate. R133, E167, K283, and K307 together coordinate NAD(+). Residues C401, C404, C419, and C424 each contribute to the Zn(2+) site. The BRCT domain occupies 587-671; it reads EEELVFAGKT…YLPDEGGLNE (85 aa).

Belongs to the NAD-dependent DNA ligase family. LigA subfamily. Requires Mg(2+) as cofactor. Mn(2+) is required as a cofactor.

It carries out the reaction NAD(+) + (deoxyribonucleotide)n-3'-hydroxyl + 5'-phospho-(deoxyribonucleotide)m = (deoxyribonucleotide)n+m + AMP + beta-nicotinamide D-nucleotide.. In terms of biological role, DNA ligase that catalyzes the formation of phosphodiester linkages between 5'-phosphoryl and 3'-hydroxyl groups in double-stranded DNA using NAD as a coenzyme and as the energy source for the reaction. It is essential for DNA replication and repair of damaged DNA. The chain is DNA ligase from Listeria monocytogenes serotype 4b (strain CLIP80459).